The chain runs to 530 residues: Alpha-(1,3)-fucosyltransferase 4 (530 aa).

2 disordered regions span residues 1–48 and 66–113; these read MRRL…RAVP and HLGG…TPAD. Topologically, residues 1-147 are cytoplasmic; that stretch reads MRRLWGAARK…GGRRRWRRGR (147 aa). The span at 88 to 106 shows a compositional bias: basic and acidic residues; that stretch reads ASGERQRRLEPQLQHESRC. Residues 148–172 form a helical; Signal-anchor for type II membrane protein membrane-spanning segment; it reads GLPWTVCVLAAAGLTCTALITYACW. At 173-530 the chain is on the lumenal side; sequence GQLPPLPWAS…IRNLASWFER (358 aa). N-linked (GlcNAc...) asparagine glycosylation is found at Asn-216 and Asn-315.

The protein belongs to the glycosyltransferase 10 family.

Its subcellular location is the golgi apparatus. The protein resides in the golgi stack membrane. It catalyses the reaction a beta-D-galactosyl-(1-&gt;4)-N-acetyl-beta-D-glucosaminyl derivative + GDP-beta-L-fucose = a beta-D-galactosyl-(1-&gt;4)-[alpha-L-fucosyl-(1-&gt;3)]-N-acetyl-beta-D-glucosaminyl derivative + GDP + H(+). It carries out the reaction an N-acetyl-alpha-neuraminyl-(2-&gt;3)-beta-D-galactosyl-(1-&gt;4)-N-acetyl-beta-D-glucosaminyl derivative + GDP-beta-L-fucose = an alpha-Neu5Ac-(2-&gt;3)-beta-D-Gal-(1-&gt;4)-[alpha-L-Fuc-(1-&gt;3)]-beta-D-GlcNAc derivative + GDP + H(+). The catalysed reaction is an alpha-Neu5Ac-(2-&gt;3)-beta-D-Gal-(1-&gt;4)-beta-D-GlcNAc-(1-&gt;3)-beta-D-Gal-(1-&gt;4)-beta-D-GlcNAc derivative + GDP-beta-L-fucose = an alpha-Neu5Ac-(2-&gt;3)-beta-D-Gal-(1-&gt;4)-beta-D-GlcNAc-(1-&gt;3)-beta-D-Gal-(1-&gt;4)-[alpha-L-Fuc-(1-&gt;3)]-beta-D-GlcNAc derivative + GDP + H(+). The enzyme catalyses an alpha-Neu5Ac-(2-&gt;3)-beta-D-Gal-(1-&gt;4)-beta-D-GlcNAc6S derivative + GDP-beta-L-fucose = an alpha-Neu5Ac-(2-&gt;3)-beta-D-Gal-(1-&gt;4)-[alpha-L-Fuc-(1-&gt;3)]-beta-D-GlcNAc6S derivative + GDP + H(+). Its pathway is protein modification; protein glycosylation. Catalyzes alpha(1-&gt;3) linkage of fucosyl moiety transferred from GDP-beta-L-fucose to N-acetyl glucosamine (GlcNAc) within type 2 lactosamine (LacNAc, Gal-beta(1-&gt;4)GlcNAc) glycan attached to N- or O-linked glycoproteins. Robustly fucosylates nonsialylated distal LacNAc unit of the polylactosamine chain to form Lewis X antigen (CD15), a glycan determinant known to mediate important cellular functions in development and immunity. Fucosylates with lower efficiency sialylated LacNAc acceptors to form sialyl Lewis X and 6-sulfo sialyl Lewis X determinants that serve as recognition epitopes for C-type lectins. Together with FUT7 contributes to SELE, SELL and SELP selectin ligand biosynthesis and selectin-dependent lymphocyte homing, leukocyte migration and blood leukocyte homeostasis. In a cell type specific manner, may also fucosylate the internal LacNAc unit of the polylactosamine chain to form VIM-2 antigen that serves as recognition epitope for SELE. This Pan troglodytes (Chimpanzee) protein is Alpha-(1,3)-fucosyltransferase 4 (FUT4).